A 361-amino-acid chain; its full sequence is MGSVDASEKTITGWAARDATGHLSPYTYNLRRTGAEDVVLKVLYCGICHTDLHQTKNHLGASKYPMVPGHEVVGEVVEVGPEVSKYSVGDVVGVGVIVGCCRDCRPCKANVEQYCNKKIWSYNDVYTDGKPTQGGFAGSMVVDQKFVVKIPAGLAPEQAAPLLCAGVTVYSPLKHFGLMTPGLRGGILGLGGVGHMGVKVAKSMGHHVTVISSSDKKRAEAMDDLGADDYLVSSDEAQMAAAMDSLDYIIDTVPVKHPLEPYLALLKMDGKLVLMGVIGEPLSFVSPMVMLGRKTITGSFIGSIEETEEVLRFCVDKGLTSQIEVVKMDYLNQALERLERNDVRYRFVVDVAGSNIDDTAA.

C48 contributes to the Zn(2+) binding site. NADP(+) is bound at residue T50. Zn(2+)-binding residues include H70, E71, C101, C104, C107, C115, and C164. NADP(+) is bound by residues T168, 189–194 (GLGGVG), 212–217 (SSSDKK), T252, G276, and 299–301 (SFI).

This sequence belongs to the zinc-containing alcohol dehydrogenase family. In terms of assembly, homodimer. Requires Zn(2+) as cofactor.

It catalyses the reaction (E)-cinnamyl alcohol + NADP(+) = (E)-cinnamaldehyde + NADPH + H(+). The enzyme catalyses (E)-coniferol + NADP(+) = (E)-coniferaldehyde + NADPH + H(+). It carries out the reaction (E)-sinapyl alcohol + NADP(+) = (E)-sinapaldehyde + NADPH + H(+). The catalysed reaction is (E)-4-coumaroyl alcohol + NADP(+) = (E)-4-coumaraldehyde + NADPH + H(+). It catalyses the reaction (E)-caffeyl alcohol + NADP(+) = (E)-caffeyl aldehyde + NADPH + H(+). It functions in the pathway aromatic compound metabolism; phenylpropanoid biosynthesis. Its function is as follows. Involved in lignin biosynthesis. Catalyzes the final step specific for the production of lignin monomers. Catalyzes the NADPH-dependent reduction of coniferaldehyde, 5-hydroxyconiferaldehyde, sinapaldehyde, 4-coumaraldehyde and caffeyl aldehyde to their respective alcohols. The sequence is that of Probable cinnamyl alcohol dehydrogenase from Lolium perenne (Perennial ryegrass).